Consider the following 326-residue polypeptide: BTB/POZ domain-containing protein At1g21780 (326 aa).

Residues 161-228 (TDVIIHTADG…LYGNITQEEF (68 aa)) enclose the BTB domain.

In terms of assembly, homodimer. Interacts with CUL3A and CUL3B.

It functions in the pathway protein modification; protein ubiquitination. In terms of biological role, may act as a substrate-specific adapter of an E3 ubiquitin-protein ligase complex (CUL3-RBX1-BTB) which mediates the ubiquitination and subsequent proteasomal degradation of target proteins. The protein is BTB/POZ domain-containing protein At1g21780 of Arabidopsis thaliana (Mouse-ear cress).